Reading from the N-terminus, the 334-residue chain is Ferredoxin--NADP reductase (334 aa).

Residues Asp33, Gln41, Tyr46, Ala86, Phe120, Asp286, and Thr327 each coordinate FAD.

It belongs to the ferredoxin--NADP reductase type 2 family. Homodimer. FAD serves as cofactor.

The catalysed reaction is 2 reduced [2Fe-2S]-[ferredoxin] + NADP(+) + H(+) = 2 oxidized [2Fe-2S]-[ferredoxin] + NADPH. In Rickettsia massiliae (strain Mtu5), this protein is Ferredoxin--NADP reductase.